The following is a 146-amino-acid chain: Hemoglobin subunit beta (146 aa).

Residue Val-1 is modified to N-acetylvaline. The 145-residue stretch at 2-146 folds into the Globin domain; that stretch reads HLTADEKAAV…VATALAHKYH (145 aa). A Phosphothreonine modification is found at Thr-12. At Ser-44 the chain carries Phosphoserine. N6-acetyllysine is present on Lys-59. A heme b-binding site is contributed by His-63. N6-acetyllysine is present on Lys-82. His-92 contacts heme b. Cys-93 is subject to S-nitrosocysteine. Lys-144 is subject to N6-acetyllysine.

The protein belongs to the globin family. Heterotetramer of two alpha chains and two beta chains. In terms of tissue distribution, red blood cells.

Its function is as follows. Involved in oxygen transport from the lung to the various peripheral tissues. The polypeptide is Hemoglobin subunit beta (HBB) (Cephalopachus bancanus (Western tarsier)).